Consider the following 203-residue polypeptide: Apoptosis-associated speck-like protein containing a CARD (203 aa).

The Pyrin domain maps to 1-91; that stretch reads MAESFKEHLQ…DDLLRNTGQS (91 aa). A CARD domain is found at 112–203; that stretch reads VAFSKVNFID…FLMDDLEDAE (92 aa).

Self-associates (via pyrin and CARD domains). Interacts (via pyrin domain) with caspa (via pyrin domain). Interacts with caspb; the interaction only occurs in the presence of nlrp1. Component of NLRP1 inflammasomes. Inflammasomes are supramolecular complexes that assemble in the cytosol in response to pathogens and other damage-associated signals and play critical roles in innate immunity and inflammation. The NLRP1 inflammasome is composed of the signal sensor nlrp1, and the adapter pycard (asc), which recruit effector pro-inflammatory caspases caspa and/or caspb. The interaction between nlrp1 and pycard is required for the sequential recruitment of caspa and then caspb. Within the complex caspa is preferentially recruited first and this causes the cleavage of pro-il1b into the midformed il1b. This is followed by the recruitment of caspb, which is activated and cleaves the midformed il1b resulting in il1b maturation. Interacts (via pyrin domain) with NLP3X1 (via pyrin domain). Interacts with gbp4. Expressed in the kidney, intestine and gill. Expressed at low levels in the heart.

Its subcellular location is the cytoplasm. The protein resides in the inflammasome. Its function is as follows. Functions as a key mediator in apoptosis and inflammation. Promotes caspase-mediated apoptosis. Induces proteolytic processing of caspa and caspa-dependent apoptosis. Involved in innate immune response by acting as an integral adapter in the assembly of various inflammasomes which recruit and activate caspase-1 leading to processing and secretion of pro-inflammatory cytokines. Caspase-1-dependent inflammation leads to macrophage pyroptosis, a form of cell death. The function as activating adapter in different types of inflammasomes is mediated by the pyrin and CARD domains and their homotypic interactions. Clustered PYCARD nucleates the formation of caspase-1 filaments through the interaction of their respective CARD domains, acting as a platform for of caspase-1 polymerization. Also involved in transcriptional activation of cytokines and chemokines independent of the inflammasome. This chain is Apoptosis-associated speck-like protein containing a CARD (pycard), found in Danio rerio (Zebrafish).